Here is a 427-residue protein sequence, read N- to C-terminus: MASVVLIGTQWGDEGKGKVTDFLAEKADLVVRYQGGNNAGHTVVAKGEEFKLHLIPSGILYEDKTCVIGNGVVVDPKVLLEELAYLSERKVKTGKLLISSNAHVIMPYHRLLDALEEDSRGEHKIGTTKRGIGPAYMDKTLRIGIRIMDLIDDEEFAAKLRRNLQEKNNLLTKVYGVEPLDYDAIYQEYSGYAQKIRGLVADSSLVIDESLKAGEKVLFEGAQGTLLDLDHGTYPYVTSSHPIAGGACTGAGVGPTRINRVVGVIKAYTTRVGEGPFPTELADETGELMRQNGHEFGTTTGRARRCGWFDAMIARYAVRVSGISDFALMKLDVLSGFEKIKICVGYRVNNEVIYEFPQSQKIFKACEPVYEVIEGWQEDITGVTHFEDLPKAAQDYVRRIEQLTETQVTLIAVGPGREQTIVRGEIF.

Residues Gly12–Lys18 and Gly40–Thr42 contribute to the GTP site. Asp13 acts as the Proton acceptor in catalysis. 2 residues coordinate Mg(2+): Asp13 and Gly40. Residues Asp13 to Lys16, Asn38 to His41, Thr128, Arg142, Gln223, Thr238, and Arg302 contribute to the IMP site. Catalysis depends on His41, which acts as the Proton donor. Substrate is bound at residue Thr298–Arg304. Residues Arg304, Lys330–Asp332, and Ala412–Gly414 each bind GTP.

It belongs to the adenylosuccinate synthetase family. As to quaternary structure, homodimer. Requires Mg(2+) as cofactor.

The protein localises to the cytoplasm. The catalysed reaction is IMP + L-aspartate + GTP = N(6)-(1,2-dicarboxyethyl)-AMP + GDP + phosphate + 2 H(+). It functions in the pathway purine metabolism; AMP biosynthesis via de novo pathway; AMP from IMP: step 1/2. Its function is as follows. Plays an important role in the de novo pathway of purine nucleotide biosynthesis. Catalyzes the first committed step in the biosynthesis of AMP from IMP. In Desulfitobacterium hafniense (strain Y51), this protein is Adenylosuccinate synthetase.